A 164-amino-acid chain; its full sequence is Cytochrome c-type biogenesis protein CcmE (164 aa).

The Cytoplasmic portion of the chain corresponds to 1–8 (MNPRRKSR). The chain crosses the membrane as a helical; Signal-anchor for type II membrane protein span at residues 9–29 (LYLAVVVLIGIGLTTTLVLYA). Over 30–164 (LRSNIDLFYT…NSTAAQGNAS (135 aa)) the chain is Periplasmic. Heme contacts are provided by His-130 and Tyr-134. Over residues 131-150 (DEKYTPPEVKEAMKENHTRP) the composition is skewed to basic and acidic residues. The disordered stretch occupies residues 131-164 (DEKYTPPEVKEAMKENHTRPAEAYNSTAAQGNAS). Residues 154–164 (YNSTAAQGNAS) are compositionally biased toward polar residues.

Belongs to the CcmE/CycJ family.

It localises to the cell inner membrane. Its function is as follows. Heme chaperone required for the biogenesis of c-type cytochromes. Transiently binds heme delivered by CcmC and transfers the heme to apo-cytochromes in a process facilitated by CcmF and CcmH. The polypeptide is Cytochrome c-type biogenesis protein CcmE (Yersinia enterocolitica serotype O:8 / biotype 1B (strain NCTC 13174 / 8081)).